Reading from the N-terminus, the 367-residue chain is Forkhead box protein I1-B (367 aa).

2 disordered regions span residues 1–21 (MNPV…HLPH) and 213–274 (DNGN…PPTV). Residues 128–222 (RPPYSYSALI…DNGNFRRKRK (95 aa)) constitute a DNA-binding region (fork-head). Positions 233–246 (AKRDEDHLNPKGKE) are enriched in basic and acidic residues. Residues 252 to 274 (TPSSSPEVLSPTGHSKSPSPPTV) are compositionally biased toward polar residues.

Initially localized to the animal hemisphere (the presumptive ectoderm) of early-mid blastula embryos. Becomes restricted to head placodes, excluding the otic placodes, by the tailbud stages.

The protein resides in the nucleus. In terms of biological role, transcription factor. Essential for ventral specification of the early cephalic (head) ectoderm during gastrulation, playing a role in the 'non-neural' versus 'neural' cell fate choice. Binds to DNA via the target sequence 5'-[AG]TAAA[CT]A-3', with 5'-ATAAACA-3' being the preferred binding site. The sequence is that of Forkhead box protein I1-B (foxi1-b) from Xenopus laevis (African clawed frog).